The primary structure comprises 168 residues: 6,7-dimethyl-8-ribityllumazine synthase (168 aa).

5-amino-6-(D-ribitylamino)uracil-binding positions include F24, 58–60 (ALE), and 82–84 (AVI). 87–88 (ET) is a (2S)-2-hydroxy-3-oxobutyl phosphate binding site. H90 acts as the Proton donor in catalysis. N115 contacts 5-amino-6-(D-ribitylamino)uracil. A (2S)-2-hydroxy-3-oxobutyl phosphate-binding site is contributed by R129.

The protein belongs to the DMRL synthase family.

The enzyme catalyses (2S)-2-hydroxy-3-oxobutyl phosphate + 5-amino-6-(D-ribitylamino)uracil = 6,7-dimethyl-8-(1-D-ribityl)lumazine + phosphate + 2 H2O + H(+). It participates in cofactor biosynthesis; riboflavin biosynthesis; riboflavin from 2-hydroxy-3-oxobutyl phosphate and 5-amino-6-(D-ribitylamino)uracil: step 1/2. Catalyzes the formation of 6,7-dimethyl-8-ribityllumazine by condensation of 5-amino-6-(D-ribitylamino)uracil with 3,4-dihydroxy-2-butanone 4-phosphate. This is the penultimate step in the biosynthesis of riboflavin. The protein is 6,7-dimethyl-8-ribityllumazine synthase of Paraburkholderia xenovorans (strain LB400).